A 217-amino-acid chain; its full sequence is Probable transaldolase (217 aa).

The Schiff-base intermediate with substrate role is filled by lysine 83.

This sequence belongs to the transaldolase family. Type 3B subfamily.

The protein resides in the cytoplasm. The catalysed reaction is D-sedoheptulose 7-phosphate + D-glyceraldehyde 3-phosphate = D-erythrose 4-phosphate + beta-D-fructose 6-phosphate. The protein operates within carbohydrate degradation; pentose phosphate pathway; D-glyceraldehyde 3-phosphate and beta-D-fructose 6-phosphate from D-ribose 5-phosphate and D-xylulose 5-phosphate (non-oxidative stage): step 2/3. Functionally, transaldolase is important for the balance of metabolites in the pentose-phosphate pathway. The chain is Probable transaldolase from Bartonella bacilliformis (strain ATCC 35685 / KC583 / Herrer 020/F12,63).